Reading from the N-terminus, the 101-residue chain is Small ribosomal subunit protein uS14 (101 aa).

Belongs to the universal ribosomal protein uS14 family. Part of the 30S ribosomal subunit. Contacts proteins S3 and S10.

Binds 16S rRNA, required for the assembly of 30S particles and may also be responsible for determining the conformation of the 16S rRNA at the A site. This is Small ribosomal subunit protein uS14 from Ruegeria sp. (strain TM1040) (Silicibacter sp.).